A 430-amino-acid chain; its full sequence is Trigger factor (430 aa).

In terms of domain architecture, PPIase FKBP-type spans 157-242 (GDLVALETWS…AVEVSEPVLP (86 aa)).

Belongs to the FKBP-type PPIase family. Tig subfamily.

It localises to the cytoplasm. It carries out the reaction [protein]-peptidylproline (omega=180) = [protein]-peptidylproline (omega=0). In terms of biological role, involved in protein export. Acts as a chaperone by maintaining the newly synthesized protein in an open conformation. Functions as a peptidyl-prolyl cis-trans isomerase. The protein is Trigger factor of Xanthomonas axonopodis pv. citri (strain 306).